Consider the following 499-residue polypeptide: Cytochrome P450 81Q32 (499 aa).

Residues Thr-5–Val-25 form a helical membrane-spanning segment. Residues Asn-112, Asn-183, and Asn-266 are each glycosylated (N-linked (GlcNAc...) asparagine). Cys-434 lines the heme pocket.

This sequence belongs to the cytochrome P450 family. Expressed in leaf epidermis and in the leaf internal phloem-associated parenchyma (IPAP) inside the mesophyll.

It localises to the membrane. In Catharanthus roseus (Madagascar periwinkle), this protein is Cytochrome P450 81Q32.